Reading from the N-terminus, the 443-residue chain is MSLPFLTSAPGKVIIFGEHSAVYNKPAVAASVSALRTYLLISESSAPDTIELDFPDISFNHKWSINDFNAITEDQVNSQKLAKAQQATDGLSQELVSLLDPLLAQLSESFHYHAAFCFLYMFVCLCPHAKNIKFSLKSTLPIGAGLGSSASISVSLALAMAYLGGLIGSNDLEKLSENDKHIVNQWAFIGEKCIHGTPSGIDNAVATYGNALLFEKDSHNGTINTNNFKFLDDFPAIPMILTYTRIPRSTKDLVARVRVLVTEKFPEVMKPILDAMGECALQGLEIMTKLSKCKGTDDEAVETNNELYEQLLELIRINHGLLVSIGVSHPGLELIKNLSDDLRIGSTKLTGAGGGGCSLTLLRRDITQEQIDSFKKKLQDDFSYETFETDLGGTGCCLLSAKNLNKDLKIKSLVFQLFENKTTTKQQIDDLLLPGNTNLPWTS.

ATP-binding positions include Lys12, Ser138, and 143-149 (GAGLGSS). Mg(2+)-binding residues include Ser149 and Glu191. Asp202 acts as the Proton acceptor in catalysis.

It belongs to the GHMP kinase family. Mevalonate kinase subfamily. Homodimer. Requires Mg(2+) as cofactor.

Its subcellular location is the cytoplasm. It localises to the cytosol. The enzyme catalyses (R)-mevalonate + ATP = (R)-5-phosphomevalonate + ADP + H(+). It functions in the pathway isoprenoid biosynthesis; isopentenyl diphosphate biosynthesis via mevalonate pathway; isopentenyl diphosphate from (R)-mevalonate: step 1/3. With respect to regulation, farnesyl pyrophosphate and geranyl pyrophosphate inhibit mevalonate kinase by binding competitively at the ATP-binding site. In terms of biological role, mevalonate kinase; part of the second module of ergosterol biosynthesis pathway that includes the middle steps of the pathway. ERG12 converts mevalonate into 5-phosphomevalonate. The second module is carried out in the vacuole and involves the formation of farnesyl diphosphate, which is also an important intermediate in the biosynthesis of ubiquinone, dolichol, heme and prenylated proteins. Activity by the mevalonate kinase ERG12 first converts mevalonate into 5-phosphomevalonate. 5-phosphomevalonate is then further converted to 5-diphosphomevalonate by the phosphomevalonate kinase ERG8. The diphosphomevalonate decarboxylase MVD1/ERG19 then produces isopentenyl diphosphate. The isopentenyl-diphosphate delta-isomerase IDI1 then catalyzes the 1,3-allylic rearrangement of the homoallylic substrate isopentenyl (IPP) to its highly electrophilic allylic isomer, dimethylallyl diphosphate (DMAPP). Finally the farnesyl diphosphate synthase ERG20 catalyzes the sequential condensation of isopentenyl pyrophosphate with dimethylallyl pyrophosphate, and then with the resultant geranylpyrophosphate to the ultimate product farnesyl pyrophosphate. The chain is Mevalonate kinase from Saccharomyces cerevisiae (strain ATCC 204508 / S288c) (Baker's yeast).